Here is a 178-residue protein sequence, read N- to C-terminus: Oligoribonuclease (178 aa).

Residues 7-168 (LIWIDLEMTG…DDIRESIAEL (162 aa)) form the Exonuclease domain. Tyrosine 128 is an active-site residue.

This sequence belongs to the oligoribonuclease family.

Its subcellular location is the cytoplasm. 3'-to-5' exoribonuclease specific for small oligoribonucleotides. The polypeptide is Oligoribonuclease (Francisella tularensis subsp. novicida (strain U112)).